A 95-amino-acid polypeptide reads, in one-letter code: Small ribosomal subunit protein uS19 (95 aa).

Belongs to the universal ribosomal protein uS19 family.

Functionally, protein S19 forms a complex with S13 that binds strongly to the 16S ribosomal RNA. The polypeptide is Small ribosomal subunit protein uS19 (Chloroflexus aurantiacus (strain ATCC 29366 / DSM 635 / J-10-fl)).